The following is a 318-amino-acid chain: NAC domain-containing protein 68 (318 aa).

Residues 21-175 (LPPGFRFHPT…EWVLCRLYNK (155 aa)) form the NAC domain.

As to expression, expressed in stems, leaf blades and callus. Weakly expressed in developing flowers.

It is found in the nucleus. Functionally, probable transcription factor involved in stress response. This chain is NAC domain-containing protein 68, found in Oryza sativa subsp. japonica (Rice).